The following is a 504-amino-acid chain: Xanthotoxol synthase (504 aa).

The helical transmembrane segment at 3 to 23 (PAAIFLILAIPIASVYLLFYH) threads the bilayer. Positions 363–368 (PGPLLI) are substrate specificity. Residue C444 participates in heme binding.

It belongs to the cytochrome P450 family. The cofactor is heme.

The protein localises to the microsome membrane. It carries out the reaction psoralen + reduced [NADPH--hemoprotein reductase] + O2 = xanthotoxol + oxidized [NADPH--hemoprotein reductase] + H2O + H(+). The enzyme catalyses 6-methoxycoumarin + reduced [NADPH--hemoprotein reductase] + O2 = scopoletin + oxidized [NADPH--hemoprotein reductase] + H2O + H(+). It participates in secondary metabolite biosynthesis. Its function is as follows. Involved in the biosynthesis of coumarins and furanocoumarins (FCs), natural products required for defense responses against attacks by predators with potential medical and agroindustrial usages such as anticoagulant, rodenticide and artificial vanilla substitutes. Catalyzes the conversion of psoralen into xanthotoxol and of 6-methoxycoumarin into scopoletin. Can also convert with a lower efficiency scopoletin into fraxetin and 7-methoxycoumarin into daphnetin-7-methylether, and use 7-methoxy-3-methylcoumarin as substrate. This Pastinaca sativa (Wild parsnip) protein is Xanthotoxol synthase.